The primary structure comprises 261 residues: 3-methyl-2-oxobutanoate hydroxymethyltransferase (261 aa).

Mg(2+)-binding residues include Asp44 and Asp83. Residues 44–45, Asp83, and Lys113 contribute to the 3-methyl-2-oxobutanoate site; that span reads DS. Glu115 is a Mg(2+) binding site. Glu183 serves as the catalytic Proton acceptor.

Belongs to the PanB family. As to quaternary structure, homodecamer; pentamer of dimers. The cofactor is Mg(2+).

It is found in the cytoplasm. The enzyme catalyses 3-methyl-2-oxobutanoate + (6R)-5,10-methylene-5,6,7,8-tetrahydrofolate + H2O = 2-dehydropantoate + (6S)-5,6,7,8-tetrahydrofolate. The protein operates within cofactor biosynthesis; (R)-pantothenate biosynthesis; (R)-pantoate from 3-methyl-2-oxobutanoate: step 1/2. Catalyzes the reversible reaction in which hydroxymethyl group from 5,10-methylenetetrahydrofolate is transferred onto alpha-ketoisovalerate to form ketopantoate. The protein is 3-methyl-2-oxobutanoate hydroxymethyltransferase of Cyanothece sp. (strain PCC 7425 / ATCC 29141).